The sequence spans 91 residues: Small ribosomal subunit protein uS19 (91 aa).

Belongs to the universal ribosomal protein uS19 family.

Its function is as follows. Protein S19 forms a complex with S13 that binds strongly to the 16S ribosomal RNA. The chain is Small ribosomal subunit protein uS19 from Lachnospira eligens (strain ATCC 27750 / DSM 3376 / VPI C15-48 / C15-B4) (Eubacterium eligens).